A 360-amino-acid chain; its full sequence is Photosystem II protein D1 (360 aa).

Helical transmembrane passes span Tyr-29–Ser-46, His-118–Phe-133, and Trp-142–Ala-156. Residue His-118 participates in chlorophyll a binding. Tyr-126 lines the pheophytin a pocket. Asp-170 and Glu-189 together coordinate [CaMn4O5] cluster. Residues Leu-197–Leu-218 traverse the membrane as a helical segment. His-198 is a chlorophyll a binding site. A quinone contacts are provided by residues His-215 and Ser-264–Phe-265. His-215 provides a ligand contact to Fe cation. His-272 lines the Fe cation pocket. A helical transmembrane segment spans residues Phe-274–Met-288. The [CaMn4O5] cluster site is built by His-332, Glu-333, Asp-342, and Ala-344. Positions Ser-345–Gly-360 are excised as a propeptide.

It belongs to the reaction center PufL/M/PsbA/D family. In terms of assembly, PSII is composed of 1 copy each of membrane proteins PsbA, PsbB, PsbC, PsbD, PsbE, PsbF, PsbH, PsbI, PsbJ, PsbK, PsbL, PsbM, PsbT, PsbX, PsbY, PsbZ, Psb30/Ycf12, at least 3 peripheral proteins of the oxygen-evolving complex and a large number of cofactors. It forms dimeric complexes. The D1/D2 heterodimer binds P680, chlorophylls that are the primary electron donor of PSII, and subsequent electron acceptors. It shares a non-heme iron and each subunit binds pheophytin, quinone, additional chlorophylls, carotenoids and lipids. D1 provides most of the ligands for the Mn4-Ca-O5 cluster of the oxygen-evolving complex (OEC). There is also a Cl(-1) ion associated with D1 and D2, which is required for oxygen evolution. The PSII complex binds additional chlorophylls, carotenoids and specific lipids. is required as a cofactor. In terms of processing, tyr-161 forms a radical intermediate that is referred to as redox-active TyrZ, YZ or Y-Z. C-terminally processed by CTPA; processing is essential to allow assembly of the oxygen-evolving complex and thus photosynthetic growth.

It is found in the plastid. It localises to the chloroplast thylakoid membrane. The enzyme catalyses 2 a plastoquinone + 4 hnu + 2 H2O = 2 a plastoquinol + O2. Photosystem II (PSII) is a light-driven water:plastoquinone oxidoreductase that uses light energy to abstract electrons from H(2)O, generating O(2) and a proton gradient subsequently used for ATP formation. It consists of a core antenna complex that captures photons, and an electron transfer chain that converts photonic excitation into a charge separation. The D1/D2 (PsbA/PsbD) reaction center heterodimer binds P680, the primary electron donor of PSII as well as several subsequent electron acceptors. In Antithamnion sp. (Red alga), this protein is Photosystem II protein D1.